A 471-amino-acid chain; its full sequence is MKQSTIALALLPLLFTPVTKARTPEMPVLENRAAQGDITAPGGARRLTGDQTAALRDSLSDKPAKNIILLIGDGMGDSEITAARNYAEGAGGFFKGIDALPLTGQYTHYALNKKTGKPDYVTDSAASATAWSTGVKTYNGALGVDIHEKDHPTILEMAKAAGLATGNVSTAELQDATPAALVAHVTSRKCYGPSATSEKCPGNALEKGGKGSITEQLLNARADVTLGGGAKTFAETATAGEWQGKTLREQAQARGYQLVSDAASLNSVTEANQQKPLLGLFADGNMPVRWLGPKATYHGNIDKPAVTCTPNPQRNDSVPTLAQMTDKAIELLSKNEKGFFLQVEGASIDKQDHAANPCGQIGETVDLDEAVQRALEFAKKEGNTLVIVTADHAHASQIVAPDTKAPGLTQALNTKDGAVMVMSYGNSEEDSQEHTGSQLRIAAYGPHAANVVGLTDQTDLFYTMKAALGLK.

The signal sequence occupies residues Met-1 to Ala-21. Asp-73 contacts Mg(2+). Asp-73 lines the Zn(2+) pocket. Residue Ser-124 is the Phosphoserine intermediate of the active site. The Mg(2+) site is built by Asp-175 and Thr-177. Intrachain disulfides connect Cys-190-Cys-200 and Cys-308-Cys-358. Glu-344 provides a ligand contact to Mg(2+). Zn(2+) is bound by residues Asp-349, His-353, Asp-391, His-392, and His-434.

It belongs to the alkaline phosphatase family. Isozymes 1 and 3 are a dimer of identical chains, isozyme 2 is a dimer of heterogeneous chains, one of each of the subunits from isozymes 1 and 3. The cofactor is Mg(2+). Zn(2+) is required as a cofactor.

It is found in the periplasm. The catalysed reaction is a phosphate monoester + H2O = an alcohol + phosphate. The sequence is that of Alkaline phosphatase (phoA) from Escherichia coli (strain K12).